Reading from the N-terminus, the 54-residue chain is Large ribosomal subunit protein bL33 (54 aa).

It belongs to the bacterial ribosomal protein bL33 family.

This Frankia alni (strain DSM 45986 / CECT 9034 / ACN14a) protein is Large ribosomal subunit protein bL33.